A 743-amino-acid chain; its full sequence is Ectonucleotide pyrophosphatase/phosphodiesterase C27A7.3 (743 aa).

The Cytoplasmic segment spans residues 1–23 (MSNRVVDVNSKKTGTSWKKKLMK). A helical; Signal-anchor for type II membrane protein membrane pass occupies residues 24-44 (IVIWSLAMLSFIAGLVLLGLV). Topologically, residues 45-743 (AAATISGSKN…LRRNITTSLW (699 aa)) are lumenal. The Zn(2+) site is built by D87 and T123. The Nucleophile role is filled by T123. N195 carries N-linked (GlcNAc...) asparagine glycosylation. The Zn(2+) site is built by D243, H247, D286, and H287. 2 N-linked (GlcNAc...) asparagine glycosylation sites follow: N293 and N320. Residue H383 coordinates Zn(2+). N406, N434, and N536 each carry an N-linked (GlcNAc...) asparagine glycan. The Ca(2+) site is built by D635, N637, D639, I641, and D643. N-linked (GlcNAc...) asparagine glycosylation occurs at N737.

It belongs to the nucleotide pyrophosphatase/phosphodiesterase family. It depends on Zn(2+) as a cofactor. Requires Ca(2+) as cofactor.

It localises to the membrane. Probable phosphodiesterase. The protein is Ectonucleotide pyrophosphatase/phosphodiesterase C27A7.3 of Caenorhabditis elegans.